Reading from the N-terminus, the 118-residue chain is Immunoglobulin heavy variable 4-31 (118 aa).

A signal peptide spans 1 to 19; that stretch reads MKHLWFFLLLVAAPRWVLS. Residues 20–44 are framework-1; that stretch reads QVQLQESGPGLVKPSQTLSLTCTVS. The region spanning 20–118 is the Ig-like domain; the sequence is QVQLQESGPG…ADTAVYYCAR (99 aa). Cysteines 41 and 116 form a disulfide. Positions 45 to 54 are complementarity-determining-1; that stretch reads GGSISSGGYY. Residues 55 to 71 form a framework-2 region; the sequence is WSWIRQHPGKGLEWIGY. The interval 72-78 is complementarity-determining-2; the sequence is IYYSGST. The framework-3 stretch occupies residues 79 to 116; it reads YYNPSLKSLVTISVDTSKNQFSLKLSSVTAADTAVYYC. A complementarity-determining-3 region spans residues 117 to 118; sequence AR.

Immunoglobulins are composed of two identical heavy chains and two identical light chains; disulfide-linked.

It is found in the secreted. The protein localises to the cell membrane. Functionally, v region of the variable domain of immunoglobulin heavy chains that participates in the antigen recognition. Immunoglobulins, also known as antibodies, are membrane-bound or secreted glycoproteins produced by B lymphocytes. In the recognition phase of humoral immunity, the membrane-bound immunoglobulins serve as receptors which, upon binding of a specific antigen, trigger the clonal expansion and differentiation of B lymphocytes into immunoglobulins-secreting plasma cells. Secreted immunoglobulins mediate the effector phase of humoral immunity, which results in the elimination of bound antigens. The antigen binding site is formed by the variable domain of one heavy chain, together with that of its associated light chain. Thus, each immunoglobulin has two antigen binding sites with remarkable affinity for a particular antigen. The variable domains are assembled by a process called V-(D)-J rearrangement and can then be subjected to somatic hypermutations which, after exposure to antigen and selection, allow affinity maturation for a particular antigen. This Homo sapiens (Human) protein is Immunoglobulin heavy variable 4-31.